The sequence spans 336 residues: MTELYDVAIIGGGPVGMFTAFYAGLRDTKAVLVESLATLGGQVTSLYPEKKILDVAGFTGIKGSALIDSLDEQMKLFPIDIKTSTTVTNVTKTNDLFTVTINNGSSFQAKTIIITTGKGSFEPRKMQVSGVDQLVGQGIHYFVTNKHDFDNHDVAIAGGGDSAIDMATMLNEFTHSTRIIHRRDQFRAMEQSVKQLSQSSVIKETPKKVSQIEKQSDGKLKITLAQVKNDQVTNDICVDDLIINYGFISENKIVHGWDIQPENEGQAFSVDQAMQTTIPGVFAIGDASHYEGKADLIAVGFGEAPTAVNAAIRFFDPQRRGPGHSSSMVIQDGKLI.

FAD is bound by residues Glu-34, Gln-42, Tyr-47, Val-87, Phe-121, Asp-286, and Ser-326.

The protein belongs to the ferredoxin--NADP reductase type 2 family. Homodimer. FAD is required as a cofactor.

It catalyses the reaction 2 reduced [2Fe-2S]-[ferredoxin] + NADP(+) + H(+) = 2 oxidized [2Fe-2S]-[ferredoxin] + NADPH. The polypeptide is Ferredoxin--NADP reductase (Leuconostoc mesenteroides subsp. mesenteroides (strain ATCC 8293 / DSM 20343 / BCRC 11652 / CCM 1803 / JCM 6124 / NCDO 523 / NBRC 100496 / NCIMB 8023 / NCTC 12954 / NRRL B-1118 / 37Y)).